A 1235-amino-acid chain; its full sequence is Topoisomerase 1-associated factor 1 (1235 aa).

4 disordered regions span residues 327 to 357, 584 to 610, 812 to 841, and 897 to 1235; these read RERKMDNSKTFRPPRRARKPEMEPKDLGPPV, GEEAEDVGVPEDNDADDSGDDEQHAER, EGAADGEAADERSNKSAPPHITIRPDTEAR, and EFSP…SDEE. Positions 585-603 are enriched in acidic residues; it reads EEAEDVGVPEDNDADDSGD. Acidic residues predominate over residues 929–947; it reads DDDEEEIRGFLGDDDDEDF. Over residues 964 to 973 the composition is skewed to basic residues; sequence QKKRQRKRRR. The segment covering 977 to 986 has biased composition (acidic residues); that stretch reads SGDEEDEGVS. A compositionally biased stretch (basic and acidic residues) spans 999 to 1044; the sequence is EKELEKIRKIKSEMYVHASDDETDDERDREFFERERKRQETKDSKF. Acidic residues-rich tracts occupy residues 1070 to 1081 and 1099 to 1118; these read VLDDEPESDESE and SEEEQEEEEEEEEEEDSDEE. Positions 1124–1150 are enriched in basic residues; that stretch reads AKSKTSKRKAAVPSKRPARRPGTAKKR. Residues 1156 to 1170 are compositionally biased toward acidic residues; it reads SDNDEDEDEEEDAMD. The span at 1193 to 1202 shows a compositional bias: basic and acidic residues; it reads LGRRIDKMAM. Acidic residues predominate over residues 1203-1212; sequence DDGDEDEDDQ.

Belongs to the timeless family. As to quaternary structure, component of the fork protection complex (FPC) consisting of tof-1 and csm-3.

Its subcellular location is the nucleus. In terms of biological role, forms a fork protection complex (FPC) with csm-3 and which is required for chromosome segregation during meiosis and DNA damage repair. FPC coordinates leading and lagging strand synthesis and moves with the replication fork. FPC stabilizes replication forks in a configuration that is recognized by replication checkpoint sensors. In Neurospora crassa (strain ATCC 24698 / 74-OR23-1A / CBS 708.71 / DSM 1257 / FGSC 987), this protein is Topoisomerase 1-associated factor 1 (tof-1).